The primary structure comprises 433 residues: tRNA(Ile)-lysidine synthase (433 aa).

Position 37-42 (37-42 (SGGKDS)) interacts with ATP.

The protein belongs to the tRNA(Ile)-lysidine synthase family.

The protein localises to the cytoplasm. The catalysed reaction is cytidine(34) in tRNA(Ile2) + L-lysine + ATP = lysidine(34) in tRNA(Ile2) + AMP + diphosphate + H(+). In terms of biological role, ligates lysine onto the cytidine present at position 34 of the AUA codon-specific tRNA(Ile) that contains the anticodon CAU, in an ATP-dependent manner. Cytidine is converted to lysidine, thus changing the amino acid specificity of the tRNA from methionine to isoleucine. This Leptospira interrogans serogroup Icterohaemorrhagiae serovar copenhageni (strain Fiocruz L1-130) protein is tRNA(Ile)-lysidine synthase.